Consider the following 246-residue polypeptide: Sulfate transporter CysZ (246 aa).

The next 4 helical transmembrane spans lie at leucine 24 to alanine 44, isoleucine 69 to valine 89, leucine 148 to phenylalanine 168, and leucine 214 to phenylalanine 234.

The protein belongs to the CysZ family.

The protein resides in the cell inner membrane. Functionally, high affinity, high specificity proton-dependent sulfate transporter, which mediates sulfate uptake. Provides the sulfur source for the cysteine synthesis pathway. The protein is Sulfate transporter CysZ of Pseudomonas aeruginosa (strain LESB58).